Consider the following 289-residue polypeptide: Kinetochore-associated protein MTW1 (289 aa).

Residues 105-147 (RLENQKDLVIVDENELKKSEEKLREKVNDVELAFKKNEMLLKR) are a coiled coil.

This sequence belongs to the mis12 family. Component of the MIND kinetochore complex, which is composed of at least MTW1, NNF1, NSL1 and DSN1.

The protein localises to the chromosome. It is found in the centromere. The protein resides in the kinetochore. Its subcellular location is the cytoplasm. It localises to the cytoskeleton. The protein localises to the spindle pole. Functionally, acts as an essential component of the kinetochore MIND complex, which is required for the spindle checkpoint and kinetochore integrity. MIND plays a role in establishing a bipolar spindle-kinetochore interaction by joining kinetochore subunits contacting DNA to those contacting microtubules. In Saccharomyces cerevisiae (strain ATCC 204508 / S288c) (Baker's yeast), this protein is Kinetochore-associated protein MTW1 (MTW1).